Consider the following 487-residue polypeptide: Glutamate--tRNA ligase (487 aa).

Positions 12-22 (PSPTGYMHVGN) match the 'HIGH' region motif. The 'KMSKS' region signature appears at 249 to 253 (KLSKR). Lys-252 is an ATP binding site.

Belongs to the class-I aminoacyl-tRNA synthetase family. Glutamate--tRNA ligase type 1 subfamily. Monomer.

The protein localises to the cytoplasm. The catalysed reaction is tRNA(Glu) + L-glutamate + ATP = L-glutamyl-tRNA(Glu) + AMP + diphosphate. Functionally, catalyzes the attachment of glutamate to tRNA(Glu) in a two-step reaction: glutamate is first activated by ATP to form Glu-AMP and then transferred to the acceptor end of tRNA(Glu). This is Glutamate--tRNA ligase from Clostridium novyi (strain NT).